The sequence spans 964 residues: Chromatin assembly factor 1 subunit A (964 aa).

The tract at residues 1–49 (MLEEPECGAPGARGEAAAMDCKDRPAFPVKKLIQARLPFKRLNLVPKEK) is binds to PCNA. Residues 1 to 316 (MLEEPECGAP…LHTGPSPFPA (316 aa)) are binds to CBX1 chromo shadow domain. Phosphoserine is present on residues serine 126, serine 141, and serine 144. Residues 146-232 (AQKNINGVPD…KDRDGWSEAG (87 aa)) form a disordered region. Residues 156–172 (KAGDDRGLPKARQKDEL) show a composition bias toward basic and acidic residues. Residue lysine 185 forms a Glycyl lysine isopeptide (Lys-Gly) (interchain with G-Cter in SUMO1); alternate linkage. Residue lysine 185 forms a Glycyl lysine isopeptide (Lys-Gly) (interchain with G-Cter in SUMO2); alternate linkage. Residues 236-249 (FKGKMPVVVLQDIL) carry the PxVxL motif motif. Disordered regions lie at residues 253–437 (PPAR…REEE) and 601–641 (DSDE…VPHG). Positions 284–298 (LSHSSLSSSSPTSSP) are enriched in low complexity. Residue serine 312 is modified to Phosphoserine. Positions 329 to 453 (RGSAEKNKMK…KAEITRFFQK (125 aa)) form a coiled coil. The segment covering 331 to 437 (SAEKNKMKLQ…EEEKRLREEE (107 aa)) has biased composition (basic and acidic residues). Acidic residues-rich tracts occupy residues 601-612 (DSDEEWEEEEPG) and 620-635 (GDDDDDVGEDEDEDDG). Residues 644 to 680 (SEDEGVTEECADPENHKVRQKLKAKEWDEFLAKGKRF) are necessary for homodimerization and competence for chromatin assembly. The binds to p60 stretch occupies residues 662–964 (RQKLKAKEWD…FVSPSSLRLS (303 aa)). Position 723 is a phosphothreonine (threonine 723). Residues 769–799 (RDAGSPEDSAASPPSPGPARPQTPTASEDVA) are disordered. Residues 770–780 (DAGSPEDSAAS) are compositionally biased toward low complexity. Phosphoserine occurs at positions 773, 783, 811, 876, and 881. A disordered region spans residues 859–878 (EDSGSVPAPGPGQGMPVSLK). Disordered stretches follow at residues 897 to 920 (DGQVGTGDLDDFQADTEEEDDDEG) and 933 to 964 (IQAPCGTTSGAGGSVGMDTSESFVSPSSLRLS). Residues 904–920 (DLDDFQADTEEEDDDEG) are compositionally biased toward acidic residues. Positions 949–964 (MDTSESFVSPSSLRLS) are enriched in polar residues. Position 959 is a phosphoserine (serine 959).

The protein belongs to the CHAF1A family. Homodimer. Part of the CAF-1 complex that contains RBBP4, CHAF1B and CHAF1A. CHAF1A binds directly to CHAF1B. Only minor amounts of RBBP4 are complexed with CHAF1A and CHAF1B in G1 phase. Interacts with PCNA; the interaction is direct. Interacts (via the PxVxL motif) with CBX5; the interaction is direct. Interacts with MBD1. Interacts with histones H3.1, H3.2 and H3.1t.

It localises to the nucleus. Its function is as follows. Acts as a component of the histone chaperone complex chromatin assembly factor 1 (CAF-1), which assembles histone octamers onto DNA during replication and repair. CAF-1 performs the first step of the nucleosome assembly process, bringing newly synthesized histones H3 and H4 to replicating DNA; histones H2A/H2B can bind to this chromatin precursor subsequent to DNA replication to complete the histone octamer. It may play a role in heterochromatin maintenance in proliferating cells by bringing newly synthesized cbx proteins to heterochromatic DNA replication foci. This chain is Chromatin assembly factor 1 subunit A (CHAF1A), found in Bos taurus (Bovine).